A 201-amino-acid polypeptide reads, in one-letter code: Recombination protein RecR (201 aa).

The segment at 57–74 adopts a C4-type zinc-finger fold; sequence CRICGNITENSVNPCAIC. The Toprim domain maps to 82–178; the sequence is STVFVVENSR…KVTRLAHGLA (97 aa).

It belongs to the RecR family.

Its function is as follows. May play a role in DNA repair. It seems to be involved in an RecBC-independent recombinational process of DNA repair. It may act with RecF and RecO. This chain is Recombination protein RecR, found in Leuconostoc citreum (strain KM20).